We begin with the raw amino-acid sequence, 35 residues long: Conotoxin Cl6.16 (35 aa).

3 disulfides stabilise this stretch: Cys10/Cys22, Cys16/Cys27, and Cys21/Cys34.

Expressed by the venom duct.

Its subcellular location is the secreted. This chain is Conotoxin Cl6.16, found in Californiconus californicus (California cone).